A 313-amino-acid polypeptide reads, in one-letter code: Ubiquitin-conjugating enzyme E2 Z (313 aa).

Residues 58–212 form the UBC core domain; the sequence is QCVLRIKRDI…IRHETIRVAV (155 aa). Residue cysteine 147 is the Glycyl thioester intermediate of the active site. The segment at 283-313 is disordered; the sequence is VREKHRKETVDIDSDSSSSETETDTQGSSNP. A compositionally biased stretch (low complexity) spans 297–313; the sequence is DSSSSETETDTQGSSNP.

Belongs to the ubiquitin-conjugating enzyme family.

The protein resides in the cytoplasm. It is found in the nucleus. It catalyses the reaction S-ubiquitinyl-[E1 ubiquitin-activating enzyme]-L-cysteine + [E2 ubiquitin-conjugating enzyme]-L-cysteine = [E1 ubiquitin-activating enzyme]-L-cysteine + S-ubiquitinyl-[E2 ubiquitin-conjugating enzyme]-L-cysteine.. Its pathway is protein modification; protein ubiquitination. Functionally, catalyzes the covalent attachment of ubiquitin to other proteins. May be involved in apoptosis regulation. The chain is Ubiquitin-conjugating enzyme E2 Z (ube2z) from Xenopus tropicalis (Western clawed frog).